The sequence spans 383 residues: Glucose-1-phosphate adenylyltransferase (383 aa).

Alpha-D-glucose 1-phosphate is bound by residues tyrosine 99, glycine 164, 179 to 180 (EK), and serine 190.

The protein belongs to the bacterial/plant glucose-1-phosphate adenylyltransferase family. Homotetramer.

It catalyses the reaction alpha-D-glucose 1-phosphate + ATP + H(+) = ADP-alpha-D-glucose + diphosphate. Its pathway is glycan biosynthesis; glycogen biosynthesis. Its function is as follows. Involved in the biosynthesis of ADP-glucose, a building block required for the elongation reactions to produce glycogen. Catalyzes the reaction between ATP and alpha-D-glucose 1-phosphate (G1P) to produce pyrophosphate and ADP-Glc. The sequence is that of Glucose-1-phosphate adenylyltransferase from Halalkalibacterium halodurans (strain ATCC BAA-125 / DSM 18197 / FERM 7344 / JCM 9153 / C-125) (Bacillus halodurans).